The following is a 449-amino-acid chain: Trigger factor (449 aa).

The PPIase FKBP-type domain occupies 160-231 (TDQVTIEELG…VQSVQTKQLQ (72 aa)). The tract at residues 411–449 (GQQVAGRQEAGAEQTAQAAEQESGQPQAEGEQAAEQRGE) is disordered. The segment covering 415-443 (AGRQEAGAEQTAQAAEQESGQPQAEGEQA) has biased composition (low complexity).

This sequence belongs to the FKBP-type PPIase family. Tig subfamily.

The protein localises to the cytoplasm. The catalysed reaction is [protein]-peptidylproline (omega=180) = [protein]-peptidylproline (omega=0). Functionally, involved in protein export. Acts as a chaperone by maintaining the newly synthesized protein in an open conformation. Functions as a peptidyl-prolyl cis-trans isomerase. This is Trigger factor from Deinococcus geothermalis (strain DSM 11300 / CIP 105573 / AG-3a).